Here is a 1136-residue protein sequence, read N- to C-terminus: Solute carrier family 12 member 2 (1136 aa).

Disordered regions lie at residues 1–73 (MSAS…SVSG) and 91–121 (PDAA…QQHH). Residues 1 to 208 (MSASPPISAG…SESKGVVKFG (208 aa)) are Cytoplasmic-facing. Residues Thr125, Thr129, Thr134, Thr139, and Thr152 each carry the phosphothreonine modification. Residues 209–234 (WIKGVLVRCMLNIWGVMLFIRMTWIV) form a discontinuously helical membrane-spanning segment. Leu219 is a Na(+) binding site. Residues Asn220 and Ile221 each contribute to the K(+) site. Trp222 is a Na(+) binding site. Positions 223, 224, and 225 each coordinate chloride. Residues 235–238 (GQAG) lie on the Extracellular side of the membrane. Residues 239–261 (IAYSCIIVIMATVVTTITGCSTS) traverse the membrane as a helical segment. Residues 262-285 (AIATNGFVRGGGAYYLISRSLGPE) are Cytoplasmic-facing. The chain crosses the membrane as a helical span at residues 286 to 314 (FGGSIGLIFAFANAVAVAMYVVGFAETVV). Phe294 serves as a coordination point for chloride. A K(+)-binding site is contributed by Tyr305. Over 315–327 (ELLMDSGLLMIDQ) the chain is Extracellular. 2 consecutive transmembrane segments (helical) span residues 328–351 (TNDI…AGME) and 352–376 (WEAK…IGSF). Over 377 to 407 (IAVDSKKKFGFFSYDAGILAENFGPDFRGQT) the chain is Extracellular. The chain crosses the membrane as a discontinuously helical span at residues 408–427 (FFSVFSIFFPAATGILAGAN). K(+) is bound by residues Pro417, Ala418, and Thr420. Chloride is bound by residues Pro417 and Ala418. Chloride is bound by residues Gly421 and Ile422. Topologically, residues 428 to 438 (ISGDLADPQMA) are cytoplasmic. The chain crosses the membrane as a helical span at residues 439-462 (IPKGTLLAILITGLVYVGVAISAG). Over 463-523 (ACIVRDATGI…DFQVMSVVSG (61 aa)) the chain is Extracellular. N-linked (GlcNAc...) asparagine glycosylation is found at Asn475 and Asn481. Residues Cys496 and Cys507 are joined by a disulfide bond. Residues 524–551 (FSPLISAGIFSATLSSALASLVSAPKVF) traverse the membrane as a helical segment. Positions 535, 538, and 539 each coordinate Na(+). Residues 552–576 (QALCKDNIYPGIAIFGKGYGKNNEP) are Cytoplasmic-facing. 2 helical membrane passes run 577–595 (LRGY…LIAE) and 596–619 (LNVI…FSVF). Residues Phe607 and Tyr611 each coordinate chloride. At 620–636 (HASLANSPGWRPSFKYY) the chain is on the cytoplasmic side. Helical transmembrane passes span 637–656 (NMWA…FIIN) and 657–672 (WWAA…SLYI). The Cytoplasmic portion of the chain corresponds to 673 to 1136 (YVSYKKPDVN…NHQSVLTFYS (464 aa)). The segment at 689 to 702 (ALTYHQALTHSLQL) is scissor helix. Residues 875–921 (SKDSDGDSSKPSSKATSVQNSPAVQKDEDDDGKAHTQPLLKKDKKSP) are disordered. Thr1059 is subject to Phosphothreonine.

This sequence belongs to the SLC12A transporter family. Homodimer; adopts a domain-swap conformation at the scissor helices connecting the transmembrane domain and C-terminal domain. Post-translationally, phosphorylated at Thr-125, Thr-129 and Thr-134 by OXSR1/OSR1 and STK39/SPAK downstream of WNK kinases (WNK1, WNK2, WNK3 or WNK4), promoting its activity.

The protein resides in the basolateral cell membrane. It catalyses the reaction K(+)(out) + 2 chloride(out) + Na(+)(out) = K(+)(in) + 2 chloride(in) + Na(+)(in). Its activity is regulated as follows. Activated following phosphorylation by OXSR1/OSR1 and STK39/SPAK. Inhibited by bumetanide. Its function is as follows. Cation-chloride cotransporter which mediates the electroneutral transport of chloride, potassium and/or sodium ions across the membrane. Plays a vital role in the regulation of ionic balance and cell volume. Important for maintenance of endolymph volume in the otic vesicle, probably by regulating ion homeostasis. Also plays a role in normal development of the swim bladder. In Danio rerio (Zebrafish), this protein is Solute carrier family 12 member 2.